A 432-amino-acid polypeptide reads, in one-letter code: Phosphomethylpyrimidine synthase (432 aa).

Substrate contacts are provided by residues Asn-66, Met-95, Tyr-124, His-163, 185–187 (SRG), 226–229 (DGLR), and Glu-265. His-269 provides a ligand contact to Zn(2+). A substrate-binding site is contributed by Tyr-292. Residue His-333 coordinates Zn(2+). Positions 409, 412, and 416 each coordinate [4Fe-4S] cluster.

The protein belongs to the ThiC family. [4Fe-4S] cluster is required as a cofactor.

The catalysed reaction is 5-amino-1-(5-phospho-beta-D-ribosyl)imidazole + S-adenosyl-L-methionine = 4-amino-2-methyl-5-(phosphooxymethyl)pyrimidine + CO + 5'-deoxyadenosine + formate + L-methionine + 3 H(+). Its pathway is cofactor biosynthesis; thiamine diphosphate biosynthesis. Its function is as follows. Catalyzes the synthesis of the hydroxymethylpyrimidine phosphate (HMP-P) moiety of thiamine from aminoimidazole ribotide (AIR) in a radical S-adenosyl-L-methionine (SAM)-dependent reaction. This is Phosphomethylpyrimidine synthase from Caldanaerobacter subterraneus subsp. tengcongensis (strain DSM 15242 / JCM 11007 / NBRC 100824 / MB4) (Thermoanaerobacter tengcongensis).